A 282-amino-acid chain; its full sequence is NADPH-dependent 7-cyano-7-deazaguanine reductase (282 aa).

A substrate-binding site is contributed by 88 to 90 (IES). 90 to 91 (SK) serves as a coordination point for NADPH. The active-site Thioimide intermediate is C190. D197 functions as the Proton donor in the catalytic mechanism. 229–230 (HE) contacts substrate. 258–259 (RG) lines the NADPH pocket.

Belongs to the GTP cyclohydrolase I family. QueF type 2 subfamily. As to quaternary structure, homodimer.

It is found in the cytoplasm. The enzyme catalyses 7-aminomethyl-7-carbaguanine + 2 NADP(+) = 7-cyano-7-deazaguanine + 2 NADPH + 3 H(+). The protein operates within tRNA modification; tRNA-queuosine biosynthesis. Catalyzes the NADPH-dependent reduction of 7-cyano-7-deazaguanine (preQ0) to 7-aminomethyl-7-deazaguanine (preQ1). The chain is NADPH-dependent 7-cyano-7-deazaguanine reductase from Salmonella paratyphi B (strain ATCC BAA-1250 / SPB7).